Here is a 790-residue protein sequence, read N- to C-terminus: Endonuclease MutS2 (790 aa).

334–341 serves as a coordination point for ATP; that stretch reads GPNTGGKT. Residues 715–790 enclose the Smr domain; it reads IDVRGQNLEE…GMGVTIVHLK (76 aa).

The protein belongs to the DNA mismatch repair MutS family. MutS2 subfamily. In terms of assembly, homodimer. Binds to stalled ribosomes, contacting rRNA.

Endonuclease that is involved in the suppression of homologous recombination and thus may have a key role in the control of bacterial genetic diversity. In terms of biological role, acts as a ribosome collision sensor, splitting the ribosome into its 2 subunits. Detects stalled/collided 70S ribosomes which it binds and splits by an ATP-hydrolysis driven conformational change. Acts upstream of the ribosome quality control system (RQC), a ribosome-associated complex that mediates the extraction of incompletely synthesized nascent chains from stalled ribosomes and their subsequent degradation. Probably generates substrates for RQC. The sequence is that of Endonuclease MutS2 from Alkaliphilus oremlandii (strain OhILAs) (Clostridium oremlandii (strain OhILAs)).